The primary structure comprises 506 residues: Aldehyde dehydrogenase [NAD(P)+] 1 (506 aa).

Glutamate 268 functions as the Proton acceptor in the catalytic mechanism. The active-site Nucleophile is cysteine 302.

The protein belongs to the aldehyde dehydrogenase family.

It localises to the cytoplasm. It catalyses the reaction an aldehyde + NAD(+) + H2O = a carboxylate + NADH + 2 H(+). The enzyme catalyses 3-aminopropanal + NAD(+) + H2O = beta-alanine + NADH + 2 H(+). Functionally, cytoplasmic aldehyde dehydrogenase involved in ethanol oxidation. Required for pantothenic acid production through the conversion of 3-aminopropanal to beta-alanine, an intermediate in pantothenic acid (vitamin B5) and coenzyme A (CoA) biosynthesis. The polypeptide is Aldehyde dehydrogenase [NAD(P)+] 1 (ALD2) (Saccharomyces cerevisiae (strain ATCC 204508 / S288c) (Baker's yeast)).